We begin with the raw amino-acid sequence, 781 residues long: Catenin beta-1 (781 aa).

An N-acetylalanine modification is found at Ala2. The interval 2 to 23 is interaction with VCL; the sequence is ATQADLMELDMAMEPDRKAAVS. Ser23 carries the phosphoserine; by GSK3-beta; alternate modification. A glycan (O-linked (GlcNAc) serine; alternate) is linked at Ser23. A Phosphoserine; by GSK3-beta modification is found at Ser29. Ser33 and Ser37 each carry phosphoserine; by GSK3-beta and HIPK2. The interval 34-57 is disordered; sequence GIHSGATTTAPSLSGKGNPEEEDV. Thr41 carries the phosphothreonine; by GSK3-beta modification. Ser45 carries the phosphoserine modification. Lys49 is modified (N6-acetyllysine). Phosphotyrosine; by PTK6 is present on Tyr64. Position 142 is a phosphotyrosine; by FYN and PTK6 (Tyr142). ARM repeat units lie at residues 151–191, 193–234, 235–276, 277–318, 319–360, 361–389, 400–441, 442–484, 489–530, 531–571, 594–636, and 637–666; these read RAIP…IMRS, QMVS…IFKS, GGIP…VRLA, GGLQ…ILAS, GGPQ…IVEA, GGMQ…RNLS, GLLG…VCQV, GGIE…AQNA, YGLP…LREQ, GAIP…EIVE, NTIP…AEGA, and TAPL…SEDK. The tract at residues 156–178 is interaction with BCL9; sequence LTKLLNDEDQVVVNKAAVMVHQL. Position 191 is a phosphoserine; by CDK5 (Ser191). A Phosphoserine; by CDK5 modification is found at Ser246. Tyr331 carries the post-translational modification Phosphotyrosine; by PTK6. The residue at position 333 (Tyr333) is a Phosphotyrosine; by SRC and PTK6. Ser552 carries the phosphoserine modification. Thr556 bears the (Microbial infection) Phosphothreonine mark. Thr556 is subject to Phosphothreonine. Position 619 is an S-nitrosocysteine (Cys619). At Ser675 the chain carries Phosphoserine. Residues 705-781 form a disordered region; it reads EPLGYRQDDP…NQLAWFDTDL (77 aa). Basic and acidic residues predominate over residues 734–745; that stretch reads MMEHEMGGHHPG. Residues 772 to 781 are interaction with SCRIB; that stretch reads NQLAWFDTDL.

It belongs to the beta-catenin family. Two separate complex-associated pools are found in the cytoplasm. The majority is present as component of an E-cadherin:catenin adhesion complex composed of at least E-cadherin/CDH1 and beta-catenin/CTNNB1, and possibly alpha-catenin/CTNNA1; the complex is located to adherens junctions. The stable association of CTNNA1 is controversial as CTNNA1 was shown not to bind to F-actin when assembled in the complex. Alternatively, the CTNNA1-containing complex may be linked to F-actin by other proteins such as LIMA1. Another cytoplasmic pool is part of a large complex containing AXIN1, AXIN2, APC, CSNK1A1 and GSK3B that promotes phosphorylation on N-terminal Ser and Thr residues and ubiquitination of CTNNB1 via BTRC and its subsequent degradation by the proteasome. Wnt-dependent activation of DVL antagonizes the action of GSK3B. When GSK3B activity is inhibited the complex dissociates, CTNNB1 is dephosphorylated and is no longer targeted for destruction. The stabilized protein translocates to the nucleus, where it binds TCF/LEF-1 family members, BCL9, BCL9L and possibly also RUVBL1 and CHD8. Binds CTNNBIP and EP300. CTNNB1 forms a ternary complex with LEF1 and EP300 that is disrupted by CTNNBIP1 binding. Interacts with TAX1BP3 (via the PDZ domain); this interaction inhibits the transcriptional activity of CTNNB1. Interacts with AJAP1, BAIAP1, CARM1, CTNNA3, CXADR and PCDH11Y. Binds NHERF1. Interacts with GLIS2 and MUC1. Interacts with SLC30A9. Interacts with XIRP1. Interacts directly with AXIN1; the interaction is regulated by CDK2 phosphorylation of AXIN1. Interacts with SCRIB. Interacts with RAPGEF2. Interacts with PTPRU (via the cytoplasmic juxtamembrane domain). Interacts with EMD. Interacts with TNIK and TCF7L2. Interacts with SESTD1 and TRPC4. Interacts with CAV1. Interacts with TRPV4. The TRPV4 and CTNNB1 complex can interact with CDH1. Interacts with VCL. Interacts with PTPRJ. Interacts with PKT7 and CDK2. Interacts with FAT1 (via the cytoplasmic domain). Interacts with NANOS1 and NDRG2. Interacts with isoform 1 of NEK2. Interacts with both isoform 1 and isoform 2 of CDK5. Interacts with PTK6. Interacts with SOX7; this interaction may lead to proteasomal degradation of active CTNNB1 and thus inhibition of Wnt/beta-catenin-stimulated transcription. Identified in a complex with HINT1 and MITF. Interacts with FHIT. The CTNNB1 and TCF7L2/TCF4 complex interacts with PML (isoform PML-4). Interacts with FERMT2. Identified in a complex with TCF7L2/TCF4 and FERMT2. Interacts with RORA. May interact with P-cadherin/CDH3. Interacts with RNF220. Interacts with CTNND2. Interacts (via the C-terminal region) with CBY1. The complex composed, at least, of APC, CTNNB1 and GSK3B interacts with JPT1; the interaction requires the inactive form of GSK3B (phosphorylated at 'Ser-9'). Interacts with DLG5. Interacts with FAM53B; promoting translocation to the nucleus. Interacts with TMEM170B. Interacts with AHI1. Interacts with GID8. Component of an cadherin:catenin adhesion complex composed of at least of CDH26, beta-catenin/CTNNB1, alpha-catenin/CTNNA1 and p120 catenin/CTNND1. Forms a complex comprising APPL1, RUVBL2, APPL2, HDAC1 and HDAC2. Interacts with IRF2BPL; mediates the ubiquitination and degradation of CTNNB1. Interacts with AMFR. Interacts with LMBR1L. Interacts with SOX30; prevents interaction of CTNNB1 with TCF7L2/TCF4 and leads to inhibition of Wnt signaling. Interacts with SOX9; inhibiting CTNNB1 activity by competing with the binding sites of TCF/LEF within CTNNB1, thereby inhibiting the Wnt signaling. Interacts with SPN/CD43 cytoplasmic tail. Interacts (when phosphorylated at Tyr-333) with isoform M2 of PKM (PKM2); promoting transcription activation. Interacts with PKP2 (via HEAD domain). Interacts with CDH1. Interacts (when unphosphorylated) with FLYWCH1, perhaps preventing interaction of CTNNB1 with TCF4, and thereby regulating transcription activation; phosphorylation of CTNNB1 may inhibit the interaction. Interacts (via the central armadillo domains) with probable transcriptional regulator ADNP (via N-terminal region); interaction is direct and stabilizes CTNNB1 by modulating its phosphorylation by glycogen synthase kinase-3 beta GSK3B. Interacts with NR5A2. Interacts with DSG2; the interaction promotes localization of CTNNB1 at cell junctions thus reducing its nuclear localization and subsequent transcription of CTNNB1/TCF-target genes. As to quaternary structure, (Microbial infection) Interacts with herpes virus 8 protein vPK; this interaction inhibits the Wnt signaling pathway. In terms of processing, phosphorylation at Ser-552 by AMPK promotes stabilization of the protein, enhancing TCF/LEF-mediated transcription. Phosphorylation by GSK3B requires prior phosphorylation of Ser-45 by another kinase. Phosphorylation proceeds then from Thr-41 to Ser-37 and Ser-33. Phosphorylated by NEK2. EGF stimulates tyrosine phosphorylation. Phosphorylated on Ser-33 and Ser-37 by HIPK2 and GSK3B, this phosphorylation triggers proteasomal degradation. Phosphorylation on Ser-191 and Ser-246 by CDK5. Phosphorylation by CDK2 regulates insulin internalization. Phosphorylation by PTK6 at Tyr-64, Tyr-142, Tyr-331 and/or Tyr-333 with the predominant site at Tyr-64 is not essential for inhibition of transcriptional activity. Phosphorylation by SRC at Tyr-333 promotes interaction with isoform M2 of PKM (PKM2); promoting transcription activation. Post-translationally, ubiquitinated by the SCF(BTRC) E3 ligase complex when phosphorylated by GSK3B, leading to its degradation. Ubiquitinated by a E3 ubiquitin ligase complex containing UBE2D1, SIAH1, CACYBP/SIP, SKP1, APC and TBL1X, leading to its subsequent proteasomal degradation. Ubiquitinated and degraded following interaction with SOX9. Ubiquitinated via 'Lys-11'- and 'Lys-29'-linked ubiquitin chains by UBR5, leading to its stabilization. S-nitrosylation at Cys-619 within adherens junctions promotes VEGF-induced, NO-dependent endothelial cell permeability by disrupting interaction with E-cadherin, thus mediating disassembly adherens junctions. In terms of processing, O-glycosylation at Ser-23 decreases nuclear localization and transcriptional activity, and increases localization to the plasma membrane and interaction with E-cadherin CDH1. Post-translationally, deacetylated at Lys-49 by SIRT1. Phosphorylated at Thr-556 by herpes virus 1/HHV-1 leading to CTNNB1 inhibition. Expressed in several hair follicle cell types: basal and peripheral matrix cells, and cells of the outer and inner root sheaths. Expressed in colon. Present in cortical neurons (at protein level). Expressed in breast cancer tissues (at protein level).

It is found in the cytoplasm. The protein resides in the nucleus. It localises to the cytoskeleton. Its subcellular location is the cell junction. The protein localises to the adherens junction. It is found in the cell membrane. The protein resides in the microtubule organizing center. It localises to the centrosome. Its subcellular location is the spindle pole. The protein localises to the synapse. It is found in the cilium basal body. Its function is as follows. Key downstream component of the canonical Wnt signaling pathway. In the absence of Wnt, forms a complex with AXIN1, AXIN2, APC, CSNK1A1 and GSK3B that promotes phosphorylation on N-terminal Ser and Thr residues and ubiquitination of CTNNB1 via BTRC and its subsequent degradation by the proteasome. In the presence of Wnt ligand, CTNNB1 is not ubiquitinated and accumulates in the nucleus, where it acts as a coactivator for transcription factors of the TCF/LEF family, leading to activate Wnt responsive genes. Also acts as a coactivator for other transcription factors, such as NR5A2. Promotes epithelial to mesenchymal transition/mesenchymal to epithelial transition (EMT/MET) via driving transcription of CTNNB1/TCF-target genes. Involved in the regulation of cell adhesion, as component of an E-cadherin:catenin adhesion complex. Acts as a negative regulator of centrosome cohesion. Involved in the CDK2/PTPN6/CTNNB1/CEACAM1 pathway of insulin internalization. Blocks anoikis of malignant kidney and intestinal epithelial cells and promotes their anchorage-independent growth by down-regulating DAPK2. Disrupts PML function and PML-NB formation by inhibiting RANBP2-mediated sumoylation of PML. Promotes neurogenesis by maintaining sympathetic neuroblasts within the cell cycle. Involved in chondrocyte differentiation via interaction with SOX9: SOX9-binding competes with the binding sites of TCF/LEF within CTNNB1, thereby inhibiting the Wnt signaling. Acts as a positive regulator of odontoblast differentiation during mesenchymal tooth germ formation, via promoting the transcription of differentiation factors such as LEF1, BMP2 and BMP4. Activity is repressed in a MSX1-mediated manner at the bell stage of mesenchymal tooth germ formation which prevents premature differentiation of odontoblasts. This is Catenin beta-1 from Homo sapiens (Human).